The sequence spans 107 residues: Large ribosomal subunit protein P1 (107 aa).

Positions 67-82 are enriched in low complexity; that stretch reads PTATSAAAAPAAGEAS. Residues 67-107 are disordered; the sequence is PTATSAAAAPAAGEASGKAEEKKKEEPEEEGDDDMGFGLFD. The segment covering 83 to 92 has biased composition (basic and acidic residues); sequence GKAEEKKKEE.

Belongs to the eukaryotic ribosomal protein P1/P2 family. In terms of assembly, P1 and P2 exist as dimers at the large ribosomal subunit.

Functionally, plays an important role in the elongation step of protein synthesis. In Leishmania peruviana, this protein is Large ribosomal subunit protein P1.